A 228-amino-acid chain; its full sequence is DNA-binding response regulator MtrA (228 aa).

Residues 7–120 (RILVVDDDPS…ELVARVRARL (114 aa)) form the Response regulatory domain. Asp-56 carries the post-translational modification 4-aspartylphosphate. The ompR/PhoB-type DNA-binding region spans 128 to 227 (AEMLSIGDVE…VRGVGYKAGP (100 aa)).

Probably a monomer when inactive, phosphorylation may permit it to oligomerize. The monomeric form does not seem to be phosphorylated. In terms of processing, phosphorylated by MtrB.

The protein localises to the cytoplasm. Functionally, member of the two-component regulatory system MtrA/MtrB, responding to environmental signals. Controls expression of a number of genes including dnaA, ripA, fbpB and probably itself. Probably plays a role in cell division. The chain is DNA-binding response regulator MtrA (mtrA) from Mycolicibacterium smegmatis (strain ATCC 700084 / mc(2)155) (Mycobacterium smegmatis).